Consider the following 412-residue polypeptide: Double C2-like domain-containing protein beta (412 aa).

The segment at 1–36 (MTLRRRGEKATISIQEHMAIDVCPGPIRPIKQISDY) is negatively regulates targeting to plasma membrane. The tract at residues 1–90 (MTLRRRGEKA…EDVDQLFGAY (90 aa)) is mediates interaction with DYNLT1. Positions 38-123 (PRFPRGLPPD…PDADGYESDD (86 aa)) are disordered. Low complexity predominate over residues 49 to 70 (GPRAAAPPDAPARPAVAGAGRR). Residues 95–108 (GPSPGPSPARPPAK) are compositionally biased toward pro residues. Over residues 112–123 (DEPDADGYESDD) the composition is skewed to acidic residues. C2 domains are found at residues 126–250 (ALGT…SICL) and 266–399 (ERGR…ERWH). Residues aspartate 157, aspartate 163, aspartate 218, aspartate 220, aspartate 297, aspartate 303, aspartate 357, aspartate 359, and aspartate 365 each coordinate Ca(2+). The interval 257–375 (DKTEDKSLEE…FIGGVVLGIH (119 aa)) is mediates interaction with STXBP3. Serine 411 carries the phosphoserine modification.

Interacts with the SNARE (soluble N-ethylmaleimide-sensitive factor attached protein receptor) complex composed of SNAP25, STX1A and VAMP2; the interaction is calcium-dependent and competitive with SYT1. Interacts with STX4; the interaction is calcium-dependent, increased by insulin and glucose, and mediates vesicle fusion with plasma membrane in pancreatic cells and adipocytes. Interacts with STXBP3; the interaction is direct, occurs at the cell membrane and regulates glucose-stimulated insulin secretion. May interact with UNC13A; the interaction mediates targeting to the plasma membrane. Interacts with cytoplasmic dynein light chain DYNLT1. Ca(2+) serves as cofactor. In terms of tissue distribution, widely expressed with highest levels in brain and kidney. Expressed in pancreatic islet cells (at protein level).

The protein localises to the cytoplasm. It is found in the cytoplasmic granule. The protein resides in the cell membrane. Its function is as follows. Calcium sensor which positively regulates SNARE-dependent fusion of vesicles with membranes. Binds phospholipids in a calcium-dependent manner and may act at the priming stage of fusion by modifying membrane curvature to stimulate fusion. Involved in calcium-triggered exocytosis in chromaffin cells and calcium-dependent spontaneous release of neurotransmitter in absence of action potentials in neuronal cells. Involved both in glucose-stimulated insulin secretion in pancreatic cells and insulin-dependent GLUT4 transport to the plasma membrane in adipocytes. The polypeptide is Double C2-like domain-containing protein beta (Homo sapiens (Human)).